A 476-amino-acid chain; its full sequence is Sulfate adenylyltransferase subunit 1 (476 aa).

The region spanning 24-241 (KSLLRFLTCG…EDVDFVQEQE (218 aa)) is the tr-type G domain. A G1 region spans residues 33–40 (GSVDDGKS). 33–40 (GSVDDGKS) contacts GTP. Positions 91–95 (GITID) are G2. The segment at 112 to 115 (DTPG) is G3. GTP-binding positions include 112 to 116 (DTPGH) and 167 to 170 (NKMD). Residues 167–170 (NKMD) form a G4 region. Positions 205–207 (SAL) are G5.

This sequence belongs to the TRAFAC class translation factor GTPase superfamily. Classic translation factor GTPase family. CysN/NodQ subfamily. As to quaternary structure, heterodimer composed of CysD, the smaller subunit, and CysN.

The enzyme catalyses sulfate + ATP + H(+) = adenosine 5'-phosphosulfate + diphosphate. It functions in the pathway sulfur metabolism; hydrogen sulfide biosynthesis; sulfite from sulfate: step 1/3. In terms of biological role, with CysD forms the ATP sulfurylase (ATPS) that catalyzes the adenylation of sulfate producing adenosine 5'-phosphosulfate (APS) and diphosphate, the first enzymatic step in sulfur assimilation pathway. APS synthesis involves the formation of a high-energy phosphoric-sulfuric acid anhydride bond driven by GTP hydrolysis by CysN coupled to ATP hydrolysis by CysD. The sequence is that of Sulfate adenylyltransferase subunit 1 from Photobacterium profundum (strain SS9).